Reading from the N-terminus, the 415-residue chain is Lipoyl synthase, mitochondrial (415 aa).

The transit peptide at 1–32 directs the protein to the mitochondrion; that stretch reads MAVSTSHFRSLCASSRSLSRTGIVAPISCRGY. The interval 30–50 is disordered; it reads RGYATTEPSPSATSTTTTTTA. Residues 33–49 show a composition bias toward low complexity; that stretch reads ATTEPSPSATSTTTTTT. Residues Cys-132, Cys-137, Cys-143, Cys-163, Cys-167, Cys-170, and Ser-378 each contribute to the [4Fe-4S] cluster site. One can recognise a Radical SAM core domain in the interval 146–367; sequence GSDKSAATAT…RQRALDMGFL (222 aa).

The protein belongs to the radical SAM superfamily. Lipoyl synthase family. It depends on [4Fe-4S] cluster as a cofactor.

The protein localises to the mitochondrion. The catalysed reaction is [[Fe-S] cluster scaffold protein carrying a second [4Fe-4S](2+) cluster] + N(6)-octanoyl-L-lysyl-[protein] + 2 oxidized [2Fe-2S]-[ferredoxin] + 2 S-adenosyl-L-methionine + 4 H(+) = [[Fe-S] cluster scaffold protein] + N(6)-[(R)-dihydrolipoyl]-L-lysyl-[protein] + 4 Fe(3+) + 2 hydrogen sulfide + 2 5'-deoxyadenosine + 2 L-methionine + 2 reduced [2Fe-2S]-[ferredoxin]. The protein operates within protein modification; protein lipoylation via endogenous pathway; protein N(6)-(lipoyl)lysine from octanoyl-[acyl-carrier-protein]: step 2/2. Catalyzes the radical-mediated insertion of two sulfur atoms into the C-6 and C-8 positions of the octanoyl moiety bound to the lipoyl domains of lipoate-dependent enzymes, thereby converting the octanoylated domains into lipoylated derivatives. The sequence is that of Lipoyl synthase, mitochondrial from Neosartorya fischeri (strain ATCC 1020 / DSM 3700 / CBS 544.65 / FGSC A1164 / JCM 1740 / NRRL 181 / WB 181) (Aspergillus fischerianus).